The chain runs to 574 residues: MNDNLFVSLDRLLLEFVFQYEQDISIKEDTIQRINKCLESIKENKANVSKLREAINKVDEDIAFHYKHSKEIKDSCSNWKPTCDVFHKHEDYIKDQLTAYQETNEKDKKMYHDYICQYEDVLKQYQLKYSETRFSCKYYEKKKEHEEIKNRVLACTEQLQLNETILMKFLVPAPFPSLTKWTLYVVNLRYRTQDILKRANNFTKRSFELEKEADDMEIEINSLNKMARLFESKTFSEALDEKNKNTEKRKEFEERIFEKDEQVSNRSSQNSQLLLPCESQKFVRNMNSSEARVTDKKEESSANQSKFVRSDVRQKENNPQIFNDSGMDSNSKSSHIPAVKSSQGFMQFRLNQPNYNQRIEKEHIDAECGDKETVRQVRESKCSTQALYIEHFGKSIENNSVEEERDENFPQTPETPSFLRTPEALKTPESMEKMQFPKSPFFEITKNATSEGHKQKDSPGFSFLMSYTSRSPGLNLFDSSVSDSEISSDQFNEHYSAVNLNPSSSQQGIGNLFGKSEGEDAFTFSFSSDSSHTFGAGKDDFSFPFSFEQDPSTMTSSSSKDFSSSQNKTQFMFF.

Residues lysine 259–arginine 313 are disordered. Low complexity predominate over residues serine 264 to leucine 275. Phosphothreonine is present on threonine 427. Serine 430 bears the Phosphoserine mark. The disordered stretch occupies residues glutamine 549–phenylalanine 574. The segment covering serine 552–serine 565 has biased composition (low complexity).

As to quaternary structure, interacts with SYCE1. Interacts with proteasome subunit PSMA8; to participate in meiosis progression during spermatogenesis. In terms of tissue distribution, most abundantly expressed in testis. Also expressed in retina and skeletal muscle.

Its subcellular location is the chromosome. Its function is as follows. Meiotic protein that localizes to the central element of the synaptonemal complex and is required for chromosome synapsis during meiotic recombination. Required for the appropriate processing of intermediate recombination nodules before crossover formation. In Mus musculus (Mouse), this protein is Protein SIX6OS1 (Six6os1).